We begin with the raw amino-acid sequence, 129 residues long: Protein FYV12 (129 aa).

Residue N91 is glycosylated (N-linked (GlcNAc...) asparagine). Residues 109-128 form a helical membrane-spanning segment; that stretch reads LMTTFLLYVLYVCIYISAFI.

The protein resides in the membrane. Its function is as follows. Involved in K1 killer toxin resistance. The protein is Protein FYV12 (FYV12) of Saccharomyces cerevisiae (strain ATCC 204508 / S288c) (Baker's yeast).